A 247-amino-acid chain; its full sequence is Segregation and condensation protein A (247 aa).

Belongs to the ScpA family. In terms of assembly, component of a cohesin-like complex composed of ScpA, ScpB and the Smc homodimer, in which ScpA and ScpB bind to the head domain of Smc. The presence of the three proteins is required for the association of the complex with DNA.

The protein localises to the cytoplasm. Functionally, participates in chromosomal partition during cell division. May act via the formation of a condensin-like complex containing Smc and ScpB that pull DNA away from mid-cell into both cell halves. This chain is Segregation and condensation protein A, found in Bacillus cereus (strain G9842).